Reading from the N-terminus, the 163-residue chain is UPF0260 protein GOX1406 (163 aa).

It belongs to the UPF0260 family.

This is UPF0260 protein GOX1406 from Gluconobacter oxydans (strain 621H) (Gluconobacter suboxydans).